The chain runs to 299 residues: Transcription elongation factor A protein 2 (299 aa).

A TFIIS N-terminal domain is found at 6 to 83; sequence EEIARIARRL…KSWKKLLDAS (78 aa). A Glycyl lysine isopeptide (Lys-Gly) (interchain with G-Cter in ubiquitin) cross-link involves residue Lys58. Ser60 and Ser100 each carry phosphoserine. Positions 86 to 128 are disordered; that stretch reads KARERGRGMPLPTSSRDASEAPDPSRKRPELPRAPSTPRITTF. The span at 102 to 116 shows a compositional bias: basic and acidic residues; sequence DASEAPDPSRKRPEL. The 117-residue stretch at 138–254 folds into the TFIIS central domain; sequence VRNKCREMLT…EHQMARTGGT (117 aa). The TFIIS-type zinc-finger motif lies at 257 to 297; sequence DLFTCGKCRKKNCTYTQVQTRSSDEPMTTFVVCNECGNRWK. Cys261, Cys264, Cys289, and Cys292 together coordinate Zn(2+).

Belongs to the TFS-II family. In terms of assembly, interacts with the basal transcription factor GTF2B. Interacts with REXO1. As to expression, testis and ovary specific.

The protein localises to the nucleus. Necessary for efficient RNA polymerase II transcription elongation past template-encoded arresting sites. The arresting sites in DNA have the property of trapping a certain fraction of elongating RNA polymerases that pass through, resulting in locked ternary complexes. Cleavage of the nascent transcript by S-II allows the resumption of elongation from the new 3'-terminus. This is Transcription elongation factor A protein 2 (TCEA2) from Homo sapiens (Human).